The following is a 285-amino-acid chain: MKFGIVINTSRERAITLARELMAWLTEHGQDYVFDTESALRLQTARTAPIEELNKQCDAFVSLGGDGTLLFTSHYSVTKPVIGINVGYLGFLTEFSPDEMVPAIEKVLSGNYSIHNRSQLEATFRTDGKIEQLRALNDVVIEKGTYPRIPTFVIKLDGELLGSYRADGIIIATSTGSTAYSMSAGGPIIAPKSSVFVITPICPHMLTVRPIVINDEKIIEVSIDAPDGEFPLNGDGHLRKLLAPQETVTVKKSQQVINLVANENRDYCEILRTKLLWGREHDSTQ.

Aspartate 66 acts as the Proton acceptor in catalysis. Residues 66–67 (DG), 137–138 (ND), arginine 148, arginine 165, aspartate 167, and 178–183 (TAYSMS) contribute to the NAD(+) site.

The protein belongs to the NAD kinase family. It depends on a divalent metal cation as a cofactor.

Its subcellular location is the cytoplasm. It carries out the reaction NAD(+) + ATP = ADP + NADP(+) + H(+). In terms of biological role, involved in the regulation of the intracellular balance of NAD and NADP, and is a key enzyme in the biosynthesis of NADP. Catalyzes specifically the phosphorylation on 2'-hydroxyl of the adenosine moiety of NAD to yield NADP. This is NAD kinase from Chlorobium phaeobacteroides (strain DSM 266 / SMG 266 / 2430).